Consider the following 546-residue polypeptide: Probable protein kinase UbiB (546 aa).

In terms of domain architecture, Protein kinase spans 124–502 (DFDIKPLASA…RVRQGQSRYL (379 aa)). ATP-binding positions include 130–138 (LASASIAQV) and K153. D288 serves as the catalytic Proton acceptor. A run of 2 helical transmembrane segments spans residues 501 to 521 (YLFG…INRP) and 522 to 542 (DWQM…LIGW).

The protein belongs to the ABC1 family. UbiB subfamily.

The protein resides in the cell inner membrane. The protein operates within cofactor biosynthesis; ubiquinone biosynthesis [regulation]. Is probably a protein kinase regulator of UbiI activity which is involved in aerobic coenzyme Q (ubiquinone) biosynthesis. The chain is Probable protein kinase UbiB from Enterobacter sp. (strain 638).